Here is a 736-residue protein sequence, read N- to C-terminus: MGNPENIEDAYVAVIRPKNTASLNSREYRAKSYEILLHEVPIEGQKKKRKKVLLETKLQSNSEIAQGILDYVVETTKPISPANQGIKGKRVVLMRKFPLDGEKTGREAALFIVPSVVKDNTKYAYTPGCPIFYCLQDIMRVCSESSTHFATLTARMLIALDKWLDERHAQSHFIPALFRPSPLERIKTNVINPAYAAELGQVDNSLHMGYSALEIKSKMLALEKADTCIYNPLFGSDLQYTNRVDKVVINPYFGLGAPDYSKIQIPKQEKWQRSMSSVVEDKERQWVDDFPLHRNACEGDSELLSHLLDKGLSVNQLDNDHWAPIHYACWYGKVEATRILLEKGKCNPNLLNGQLSSPLHFAAGGGHAEIVQILLTHPDIDRHITDQQGRSPLNVCEENKQNNWEEAAKLLKDAINKPYEKVRIYRMDGSYRSVELKHGNNTTAQQIMEGMRLSQETQRYFTIWICSENLSLQFKPYHKPLQQVHDWPEILAELTNLDPQRETPQLFLRRDVGLPLEVEKKIEDPLAILILFDEARYNLLKGFYTAPDAKLITLASLLLQIVYGNYESKKHKQGFLNEETLKSIVPITKLKSKAPHWINRILHEYKNLSLSEGVSKEMHHLQRMFLQNCWEIPTYGAAFFTGQIFTKASPSNHKVIPVYVGVNIKGLHLLNMETKALLISLKYCCFTWQLGDAGTCFQIHSMENKMSFIVHTKQAGLVVKLLMKLNGQLMPSERNS.

Residues 1 to 170 form an N-terminal domain similar to Nudix hydrolase domain region; sequence MGNPENIEDA…DKWLDERHAQ (170 aa). Positions 172–195 are interaction with ITGB1BP1; that stretch reads HFIPALFRPSPLERIKTNVINPAY. ANK repeat units lie at residues 287–316, 320–350, 354–384, and 388–419; these read VDDF…SVNQ, DHWA…NPNL, QLSS…DRHI, and QGRS…NKPY. The FERM domain occupies 420–736; sequence EKVRIYRMDG…GQLMPSERNS (317 aa). Residues 430-452 are interaction with RAP1B; that stretch reads SYRSVELKHGNNTTAQQIMEGMR.

In terms of assembly, found in a complex, at least composed of ITGB1BP1, KRIT1 and RAP1A. Interacts (via C-terminus FERM domain) with RAP1A (active GTP-bound form preferentially); the interaction does not induce the opening conformation of KRIT1. Interacts (via N-terminus NPXY motif) with ITGB1BP1; the interaction induces the opening conformation of KRIT1 and competes with ITGB1 for ITGB1BP1 interaction. Associates (via N-terminus and C-terminus regions) with microtubules; the interaction is inhibited in presence of ITGB1BP1 and active GTP-bound RAP1A. Interacts (via FERM domain) with RAP1B. Interacts with CDH5. Interacts with RAP1A. Interacts with HEG1 and CCM2; greatly facilitates CCM2-binding to HEG1. As to expression, expressed in heart, brain, spleen, lung, thymus, kidney and testis. Isoform 2 was more frequently expressed in the thymus than isoform 1.

It is found in the cytoplasm. Its subcellular location is the cytoskeleton. The protein resides in the cell membrane. It localises to the cell junction. Functionally, component of the CCM signaling pathway which is a crucial regulator of heart and vessel formation and integrity. Negative regulator of angiogenesis. Inhibits endothelial proliferation, apoptosis, migration, lumen formation and sprouting angiogenesis in primary endothelial cells. Promotes AKT phosphorylation in a NOTCH-dependent and independent manner, and inhibits ERK1/2 phosphorylation indirectly through activation of the DELTA-NOTCH cascade. Acts in concert with CDH5 to establish and maintain correct endothelial cell polarity and vascular lumen and these effects are mediated by recruitment and activation of the Par polarity complex and RAP1B. Required for the localization of phosphorylated PRKCZ, PARD3, TIAM1 and RAP1B to the cell junction, and cell junction stabilization. Plays a role in integrin signaling via its interaction with ITGB1BP1; this prevents the interaction between ITGB1 and ITGB1BP1. Microtubule-associated protein that binds to phosphatidylinositol 4,5-bisphosphate (PIP2)-containing membranes in a GTP-bound RAP1-dependent manner. Plays an important role in the maintenance of the intracellular reactive oxygen species (ROS) homeostasis to prevent oxidative cellular damage. Regulates the homeostasis of intracellular ROS through an antioxidant pathway involving FOXO1 and SOD2. Facilitates the down-regulation of cyclin-D1 (CCND1) levels required for cell transition from proliferative growth to quiescence by preventing the accumulation of intracellular ROS through the modulation of FOXO1 and SOD2 levels. May play a role in the regulation of macroautophagy through the down-regulation of the mTOR pathway. The protein is Krev interaction trapped protein 1 (Krit1) of Mus musculus (Mouse).